Consider the following 851-residue polypeptide: Probable alpha,alpha-trehalose-phosphate synthase [UDP-forming] 7 (851 aa).

A Phosphoserine modification is found at serine 5. A Phosphothreonine modification is found at threonine 32. Residues 59 to 540 (DRMIIVANRL…SRSFLQDLER (482 aa)) are glycosyltransferase.

This sequence in the N-terminal section; belongs to the glycosyltransferase 20 family. It in the C-terminal section; belongs to the trehalose phosphatase family. As to quaternary structure, binds to the phosphopeptide-binding site of GRF/14-3-3. Phosphorylated. As to expression, expressed in seedlings, leaves, roots, stems, flowers and siliques.

It catalyses the reaction D-glucose 6-phosphate + UDP-alpha-D-glucose = alpha,alpha-trehalose 6-phosphate + UDP + H(+). The protein is Probable alpha,alpha-trehalose-phosphate synthase [UDP-forming] 7 (TPS7) of Arabidopsis thaliana (Mouse-ear cress).